Here is a 1094-residue protein sequence, read N- to C-terminus: Transport and Golgi organization protein 6 homolog (1094 aa).

The helical transmembrane segment at 468 to 488 (LTVLMDSLLPVLGVLFLLYCF) threads the bilayer. Residue serine 556 is modified to Phosphoserine. Residues 777 to 795 (EEQQQTSHERPTDVAHSHL) are compositionally biased toward basic and acidic residues. The interval 777-834 (EEQQQTSHERPTDVAHSHLEQQQSHETAPQTGLQSNAPIIPQGVNEPSTTTSQKSGSV) is disordered. 2 stretches are compositionally biased toward polar residues: residues 796 to 813 (EQQQSHETAPQTGLQSNA) and 821 to 834 (NEPSTTTSQKSGSV). HEAT repeat units lie at residues 873–909 (LEMQEKLLKIFLENLEHEDTFVYLSAIQGVALLSDVY) and 952–988 (SKYREPLIHTFLRGVRDPDGAHRASSLANLGELCQRL).

Belongs to the Tango6 family.

It is found in the membrane. The polypeptide is Transport and Golgi organization protein 6 homolog (TANGO6) (Homo sapiens (Human)).